The chain runs to 93 residues: U12-lycotoxin-Ls1d (93 aa).

Residues 1–18 (MKFAVILLFSLVVLAVAS) form the signal peptide. The propeptide occupies 19–38 (ESVEEVRREIDIEDLPEQQR).

Belongs to the neurotoxin 31 family. In terms of processing, contains 5 disulfide bonds. In terms of tissue distribution, expressed by the venom gland.

The protein resides in the secreted. The polypeptide is U12-lycotoxin-Ls1d (Lycosa singoriensis (Wolf spider)).